The sequence spans 395 residues: NAD(P)H-quinone oxidoreductase subunit H, chloroplastic (395 aa).

It belongs to the complex I 49 kDa subunit family. In terms of assembly, NDH is composed of at least 16 different subunits, 5 of which are encoded in the nucleus.

It localises to the plastid. It is found in the chloroplast thylakoid membrane. The enzyme catalyses a plastoquinone + NADH + (n+1) H(+)(in) = a plastoquinol + NAD(+) + n H(+)(out). The catalysed reaction is a plastoquinone + NADPH + (n+1) H(+)(in) = a plastoquinol + NADP(+) + n H(+)(out). NDH shuttles electrons from NAD(P)H:plastoquinone, via FMN and iron-sulfur (Fe-S) centers, to quinones in the photosynthetic chain and possibly in a chloroplast respiratory chain. The immediate electron acceptor for the enzyme in this species is believed to be plastoquinone. Couples the redox reaction to proton translocation, and thus conserves the redox energy in a proton gradient. This Citrus sinensis (Sweet orange) protein is NAD(P)H-quinone oxidoreductase subunit H, chloroplastic.